The chain runs to 376 residues: Guanine nucleotide-binding protein G(s) subunit alpha (376 aa).

Gly-2 is lipidated: N-palmitoyl glycine. Residue Cys-3 is the site of S-palmitoyl cysteine attachment. One can recognise a G-alpha domain in the interval 36–376 (GTHRLLLLGA…RMHLRQYELL (341 aa)). Residues 39-52 (RLLLLGAGESGKST) are G1 motif. Residues 44–51 (GAGESGKS), 180–186 (LRCRVLT), 205–209 (DVGGQ), 274–277 (NKQD), and Ala-348 each bind GTP. Mg(2+) contacts are provided by Ser-51 and Thr-186. The interval 178-186 (DILRCRVLT) is G2 motif. A G3 motif region spans residues 201-210 (FHMFDVGGQR). The tract at residues 270–277 (ILFLNKQD) is G4 motif. The tract at residues 346-351 (TCAVDT) is G5 motif.

Belongs to the G-alpha family. G(s) subfamily. In terms of assembly, g proteins are composed of 3 units; alpha, beta and gamma. The alpha chain contains the guanine nucleotide binding site.

Its function is as follows. Guanine nucleotide-binding proteins (G proteins) are involved as modulators or transducers in various transmembrane signaling systems. The G(s) protein is involved in hormonal regulation of adenylate cyclase: it activates the cyclase in response to beta-adrenergic stimuli. The protein is Guanine nucleotide-binding protein G(s) subunit alpha of Lymnaea stagnalis (Great pond snail).